The sequence spans 654 residues: DNA-directed RNA polymerase III subunit RPC3 (654 aa).

The residue at position 27 (threonine 27) is a Phosphothreonine. Disordered regions lie at residues 381 to 401 and 422 to 448; these read LSRK…ASLP and KSLQ…EDPH. Phosphoserine is present on residues serine 392 and serine 394. A compositionally biased stretch (acidic residues) spans 429–444; it reads DTQEEDEEEEDLDADT. The tract at residues 581 to 602 is leucine-zipper; the sequence is LEWNMANLLFKKEKLKQENSTL.

The protein belongs to the RNA polymerase beta chain family. As to quaternary structure, component of the RNA polymerase III (Pol III) complex consisting of 17 subunits.

The protein localises to the cytoplasm. Its subcellular location is the nucleus. DNA-dependent RNA polymerase catalyzes the transcription of DNA into RNA using the four ribonucleoside triphosphates as substrates. Specific core component of RNA polymerase III which synthesizes small RNAs, such as 5S rRNA and tRNAs. In Saccharomyces cerevisiae (strain YJM789) (Baker's yeast), this protein is DNA-directed RNA polymerase III subunit RPC3 (RPC82).